Consider the following 439-residue polypeptide: Damage-control phosphatase ARMT1 (439 aa).

Residue Ala-2 is modified to N-acetylalanine. A Phosphoserine modification is found at Ser-4. Lys-40 is subject to N6-acetyllysine. Positions 251 and 252 each coordinate Mn(2+). 251 to 252 provides a ligand contact to substrate; sequence DN. S-adenosyl-L-methionine-binding residues include Glu-256 and Asp-289. A Mn(2+)-binding site is contributed by Asp-289. Residues 365–369 and Lys-402 each bind substrate; that span reads DLNYR. Residues 399–402 carry the Subfamily III RTxK motif motif; sequence RTLK.

It belongs to the damage-control phosphatase family. Sugar phosphate phosphatase III subfamily. Requires Mn(2+) as cofactor. The cofactor is Ni(2+). In terms of processing, automethylated.

The enzyme catalyses beta-D-fructose 1-phosphate + H2O = D-fructose + phosphate. It catalyses the reaction beta-D-fructose 6-phosphate = dihydroxyacetone + D-glyceraldehyde 3-phosphate. The catalysed reaction is L-glutamyl-[protein] + S-adenosyl-L-methionine = [protein]-L-glutamate 5-O-methyl ester + S-adenosyl-L-homocysteine. In terms of biological role, metal-dependent phosphatase that shows phosphatase activity against several substrates, including fructose-1-phosphate and fructose-6-phosphate. Its preference for fructose-1-phosphate, a strong glycating agent that causes DNA damage rather than a canonical yeast metabolite, suggests a damage-control function in hexose phosphate metabolism. Has also been shown to have O-methyltransferase activity that methylates glutamate residues of target proteins to form gamma-glutamyl methyl ester residues. Possibly methylates PCNA, suggesting it is involved in the DNA damage response. The chain is Damage-control phosphatase ARMT1 from Mus musculus (Mouse).